A 57-amino-acid chain; its full sequence is Orphan toxin OrtT (57 aa).

2 consecutive transmembrane segments (helical) span residues 6-26 and 34-54; these read HMLV…WFLS and FLSA…ALLF.

This sequence belongs to the GhoT/OrtT toxin family.

Its subcellular location is the cell inner membrane. Functionally, acts as an orphan toxin which is important for maintaining cell fitness during stress related to the stringent response. Increases the formation of persister cells. Has no known antitoxin. The protein is Orphan toxin OrtT of Escherichia coli O6:H1 (strain CFT073 / ATCC 700928 / UPEC).